The primary structure comprises 465 residues: Polyadenylation factor subunit 2 (465 aa).

Residues 1–20 show a composition bias toward low complexity; the sequence is MDGHNQNQYQNQNQIQQSQQ. Positions 1–26 are disordered; the sequence is MDGHNQNQYQNQNQIQQSQQPPLKKY. 5 WD repeats span residues 133–163, 175–205, 217–247, 259–290, and 348–378; these read AHDSAVTTMKYSHDSDWMISGDADGMIKIWQ, AHTESIRDMAFSSNDSKFVTCSDDNILKIWN, GHHWDVKSCDWHPEMGLIASASKDNLVKLWD, KFKHTVLKTRFQPTKGNLLMAISKDKSCRVFD, and AHDKCITSLSYNPVGHIFATAAKDRTIRFWT. Residues 417-465 are disordered; that stretch reads EFGAAPPPPATLEPHALPNMNGFINKKPRQEIPGIDSNIKSSTLPGLSI. Residues 454–465 show a composition bias toward polar residues; the sequence is NIKSSTLPGLSI.

In terms of assembly, component of the cleavage and polyadenylation factor (CPF) complex, which is composed of at least PTI1, SYC1, SSU72, GLC7, MPE1, REF2, PFS2, PTA1, YSH1/BRR5, SWD2, CFT2/YDH1, YTH1, CFT1/YHH1, FIP1 and PAP1. Interacts with YSH1/BRR5, FIP1 and RNA14.

It localises to the nucleus. Integral and essential component of the cleavage and polyadenylation factor (CPF) complex, which plays a key role in polyadenylation-dependent pre-mRNA 3'-end formation and cooperates with cleavage factors including the CFIA complex and NAB4/CFIB. May bridge the CPF and CFIA complexes. The polypeptide is Polyadenylation factor subunit 2 (PFS2) (Saccharomyces cerevisiae (strain ATCC 204508 / S288c) (Baker's yeast)).